The following is a 477-amino-acid chain: Aspartyl/glutamyl-tRNA(Asn/Gln) amidotransferase subunit B (477 aa).

It belongs to the GatB/GatE family. GatB subfamily. In terms of assembly, heterotrimer of A, B and C subunits.

It carries out the reaction L-glutamyl-tRNA(Gln) + L-glutamine + ATP + H2O = L-glutaminyl-tRNA(Gln) + L-glutamate + ADP + phosphate + H(+). The catalysed reaction is L-aspartyl-tRNA(Asn) + L-glutamine + ATP + H2O = L-asparaginyl-tRNA(Asn) + L-glutamate + ADP + phosphate + 2 H(+). Allows the formation of correctly charged Asn-tRNA(Asn) or Gln-tRNA(Gln) through the transamidation of misacylated Asp-tRNA(Asn) or Glu-tRNA(Gln) in organisms which lack either or both of asparaginyl-tRNA or glutaminyl-tRNA synthetases. The reaction takes place in the presence of glutamine and ATP through an activated phospho-Asp-tRNA(Asn) or phospho-Glu-tRNA(Gln). This Thioalkalivibrio sulfidiphilus (strain HL-EbGR7) protein is Aspartyl/glutamyl-tRNA(Asn/Gln) amidotransferase subunit B.